The primary structure comprises 301 residues: Oxaloacetate tautomerase YisK (301 aa).

Position 99 (Lys-99) interacts with oxalate. Glu-148, Glu-150, and Asp-179 together coordinate Mn(2+). Residues Lys-196 and Thr-266 each contribute to the oxalate site.

It belongs to the FAH family. Homodimer. Mg(2+) is required as a cofactor. The cofactor is Mn(2+).

It localises to the cytoplasm. It catalyses the reaction oxaloacetate = enol-oxaloacetate. The enzyme catalyses oxaloacetate + H(+) = pyruvate + CO2. Tautomerase that converts enol-oxaloacetate to the keto form of oxaloacetate. Also shows weak oxaloacetate decarboxylase (ODx), catalyzing the decarboxylation of oxaloacetate (OAA) to pyruvate and CO(2). This is Oxaloacetate tautomerase YisK from Bacillus subtilis (strain 168).